The following is a 95-amino-acid chain: Aspartyl/glutamyl-tRNA(Asn/Gln) amidotransferase subunit C (95 aa).

This sequence belongs to the GatC family. Heterotrimer of A, B and C subunits.

It carries out the reaction L-glutamyl-tRNA(Gln) + L-glutamine + ATP + H2O = L-glutaminyl-tRNA(Gln) + L-glutamate + ADP + phosphate + H(+). It catalyses the reaction L-aspartyl-tRNA(Asn) + L-glutamine + ATP + H2O = L-asparaginyl-tRNA(Asn) + L-glutamate + ADP + phosphate + 2 H(+). Its function is as follows. Allows the formation of correctly charged Asn-tRNA(Asn) or Gln-tRNA(Gln) through the transamidation of misacylated Asp-tRNA(Asn) or Glu-tRNA(Gln) in organisms which lack either or both of asparaginyl-tRNA or glutaminyl-tRNA synthetases. The reaction takes place in the presence of glutamine and ATP through an activated phospho-Asp-tRNA(Asn) or phospho-Glu-tRNA(Gln). The chain is Aspartyl/glutamyl-tRNA(Asn/Gln) amidotransferase subunit C from Rhizobium leguminosarum bv. trifolii (strain WSM2304).